Reading from the N-terminus, the 297-residue chain is Ribosomal protein L11 methyltransferase (297 aa).

Thr-152, Gly-173, Asp-195, and Asn-234 together coordinate S-adenosyl-L-methionine.

It belongs to the methyltransferase superfamily. PrmA family.

Its subcellular location is the cytoplasm. It carries out the reaction L-lysyl-[protein] + 3 S-adenosyl-L-methionine = N(6),N(6),N(6)-trimethyl-L-lysyl-[protein] + 3 S-adenosyl-L-homocysteine + 3 H(+). Functionally, methylates ribosomal protein L11. The protein is Ribosomal protein L11 methyltransferase of Cupriavidus taiwanensis (strain DSM 17343 / BCRC 17206 / CCUG 44338 / CIP 107171 / LMG 19424 / R1) (Ralstonia taiwanensis (strain LMG 19424)).